The primary structure comprises 230 residues: Somatolactin (230 aa).

A signal peptide spans 1–25 (MHTKVLQQGLWALLLWPHLFTVSVP). Intrachain disulfides connect C28/C38, C88/C204, and C221/C229. Residue N144 is glycosylated (N-linked (GlcNAc...) asparagine).

Belongs to the somatotropin/prolactin family.

It localises to the secreted. Functionally, selectively regulates proliferation and morphogenesis of neural-crest derived pigment cells. The polypeptide is Somatolactin (Oryzias latipes (Japanese rice fish)).